Reading from the N-terminus, the 382-residue chain is Polyadenylate-binding protein 5 (382 aa).

RRM domains lie at 18–96, 106–182, 199–276, and 302–378; these read AALY…WSQP, GNIF…RFKF, TNVF…RAQK, and VPIY…LGQA.

The protein localises to the cytoplasm. In terms of biological role, binds the poly(A) tail of mRNA. May be involved in cytoplasmic regulatory processes of mRNA metabolism. Can probably bind to cytoplasmic RNA sequences other than poly(A) in vivo. The protein is Polyadenylate-binding protein 5 (PABPC5) of Macaca mulatta (Rhesus macaque).